The primary structure comprises 622 residues: Chaperone protein HscA homolog (622 aa).

It belongs to the heat shock protein 70 family.

In terms of biological role, chaperone involved in the maturation of iron-sulfur cluster-containing proteins. Has a low intrinsic ATPase activity which is markedly stimulated by HscB. The protein is Chaperone protein HscA homolog of Burkholderia thailandensis (strain ATCC 700388 / DSM 13276 / CCUG 48851 / CIP 106301 / E264).